Reading from the N-terminus, the 353-residue chain is MISENLGENQTEKIPLKGRTLKELSEIMITLGEKPFRAKQIYHGLYVNRYETWDQFTTFSKIFKEKLEELCSLTHLQVVKQLKSVDGTQKFTFTSESGNGKEFEAVWIPSGDGGRKTICISSQIGCTLNCKFCATAKLEFQGNLKAHEIVDQILQVEKIVGDKATNVVFMGMGEPLHNYFNVIRAASIFHDPDAFNLGAKRITISTSGVVNGIRRFIENKEPYNFAISLNHPDPKGRLQIMDIEEKFSLPELLQAAKDFTRELKRRITFEYVMIPGVNMGFENANKLVKIAKSLDCKINVIPLNTEFFGWRRPTREEIAEFIALLEPAGVPILNRRSPGKDIFGACGMLASKS.

Glu104 serves as the catalytic Proton acceptor. Residues 112 to 341 (DGGRKTICIS…ILNRRSPGKD (230 aa)) enclose the Radical SAM core domain. Cys119 and Cys346 are joined by a disulfide. [4Fe-4S] cluster-binding residues include Cys126, Cys130, and Cys133. S-adenosyl-L-methionine contacts are provided by residues 173 to 174 (GE), Ser205, 228 to 230 (SLN), and Asn304. Cys346 (S-methylcysteine intermediate) is an active-site residue.

Belongs to the radical SAM superfamily. RlmN family. [4Fe-4S] cluster serves as cofactor.

It localises to the cytoplasm. It catalyses the reaction adenosine(2503) in 23S rRNA + 2 reduced [2Fe-2S]-[ferredoxin] + 2 S-adenosyl-L-methionine = 2-methyladenosine(2503) in 23S rRNA + 5'-deoxyadenosine + L-methionine + 2 oxidized [2Fe-2S]-[ferredoxin] + S-adenosyl-L-homocysteine. It carries out the reaction adenosine(37) in tRNA + 2 reduced [2Fe-2S]-[ferredoxin] + 2 S-adenosyl-L-methionine = 2-methyladenosine(37) in tRNA + 5'-deoxyadenosine + L-methionine + 2 oxidized [2Fe-2S]-[ferredoxin] + S-adenosyl-L-homocysteine. Specifically methylates position 2 of adenine 2503 in 23S rRNA and position 2 of adenine 37 in tRNAs. This chain is Probable dual-specificity RNA methyltransferase RlmN, found in Leptospira interrogans serogroup Icterohaemorrhagiae serovar Lai (strain 56601).